A 183-amino-acid polypeptide reads, in one-letter code: Ribulose bisphosphate carboxylase small subunit, chloroplastic (183 aa).

The transit peptide at 1-59 directs the protein to the chloroplast; it reads MASSMISSGTVATVSADRPAPAQARMVAPFNGLKSSSAFPVTRKSNDITSIASNGGRVQ.

It belongs to the RuBisCO small chain family. Heterohexadecamer of 8 large and 8 small subunits.

It is found in the plastid. It localises to the chloroplast. Functionally, ruBisCO catalyzes two reactions: the carboxylation of D-ribulose 1,5-bisphosphate, the primary event in carbon dioxide fixation, as well as the oxidative fragmentation of the pentose substrate. Both reactions occur simultaneously and in competition at the same active site. Although the small subunit is not catalytic it is essential for maximal activity. This Pyrus pyrifolia (Chinese pear) protein is Ribulose bisphosphate carboxylase small subunit, chloroplastic.